An 824-amino-acid polypeptide reads, in one-letter code: Putative beta-glucuronidase (824 aa).

Residues 26-43 traverse the membrane as a helical segment; sequence YLKLVLVLYLIMVSWSGY. The Proton donor role is filled by Glu-430.

It belongs to the glycosyl hydrolase 2 family.

It is found in the membrane. The enzyme catalyses a beta-D-glucuronoside + H2O = D-glucuronate + an alcohol. Glycoside hydrolase that may be involved in ulvan degradation. Ulvan is the main polysaccharide component of the Ulvales (green seaweed) cell wall. It is composed of disaccharide building blocks comprising 3-sulfated rhamnose (Rha3S) linked to D-glucuronic acid (GlcA), L-iduronic acid (IduA), or D-xylose (Xyl). The sequence is that of Putative beta-glucuronidase from Formosa agariphila (strain DSM 15362 / KCTC 12365 / LMG 23005 / KMM 3901 / M-2Alg 35-1).